Reading from the N-terminus, the 397-residue chain is MGKAKYERSKPHVNIGTIGHVDHGKTTLTAAITITMHNRYGTGGAVAFDMIDKAPEERERGITISTAHVEYETDKRHYAHVDCPGHADYVKNMITGAAQMDGAILVCSAADGPMPQTREHILLSRQVGVPYIVVFLNKCDMVDDEELLELVEMEVRDLLNMYEFPGDDTPVIMGSALKALEDPAGPWGDKIVELFDAIDTWIPEPVRDTDKPFLMPVEDVFSITGRGTVATGRIERGIVKVQEEISLVGLSEAPRKLVVTGVEMFRKLLDQGQAGDNVGILLRGIQRDEIERGQVLAKTGSIQPHTKFMAEVYVLKKEEGGRHTPFFDGYRPQFYFRTTDVTGSIKLPEGVEMVMPGDNITMEIELISPIATEEGLRFAIREGGRTVGAGVVASIIE.

The tr-type G domain occupies 10–206 (KPHVNIGTIG…AIDTWIPEPV (197 aa)). The G1 stretch occupies residues 19-26 (GHVDHGKT). 19-26 (GHVDHGKT) is a binding site for GTP. A Mg(2+)-binding site is contributed by threonine 26. Positions 61–65 (GITIS) are G2. The G3 stretch occupies residues 82 to 85 (DCPG). Residues 82–86 (DCPGH) and 137–140 (NKCD) each bind GTP. Positions 137–140 (NKCD) are G4. A G5 region spans residues 175-177 (SAL).

The protein belongs to the TRAFAC class translation factor GTPase superfamily. Classic translation factor GTPase family. EF-Tu/EF-1A subfamily. Monomer.

It localises to the cytoplasm. It carries out the reaction GTP + H2O = GDP + phosphate + H(+). Its function is as follows. GTP hydrolase that promotes the GTP-dependent binding of aminoacyl-tRNA to the A-site of ribosomes during protein biosynthesis. The sequence is that of Elongation factor Tu 2 from Alkaliphilus metalliredigens (strain QYMF).